We begin with the raw amino-acid sequence, 222 residues long: ATP synthase F(0) complex subunit a (222 aa).

6 helical membrane passes run Ala7–Leu27, Trp64–Leu84, Gln93–Phe113, Phe132–Leu152, Ile160–Ile180, and Ile185–Ile205.

Belongs to the ATPase A chain family. In terms of assembly, component of the ATP synthase complex composed at least of ATP5F1A/subunit alpha, ATP5F1B/subunit beta, ATP5MC1/subunit c (homooctomer), MT-ATP6/subunit a, MT-ATP8/subunit 8, ATP5ME/subunit e, ATP5MF/subunit f, ATP5MG/subunit g, ATP5MK/subunit k, ATP5MJ/subunit j, ATP5F1C/subunit gamma, ATP5F1D/subunit delta, ATP5F1E/subunit epsilon, ATP5PF/subunit F6, ATP5PB/subunit b, ATP5PD/subunit d, ATP5PO/subunit OSCP. ATP synthase complex consists of a soluble F(1) head domain (subunits alpha(3) and beta(3)) - the catalytic core - and a membrane F(0) domain - the membrane proton channel (subunits c, a, 8, e, f, g, k and j). These two domains are linked by a central stalk (subunits gamma, delta, and epsilon) rotating inside the F1 region and a stationary peripheral stalk (subunits F6, b, d, and OSCP). Interacts with DNAJC30; interaction is direct.

The protein localises to the mitochondrion inner membrane. It catalyses the reaction H(+)(in) = H(+)(out). Its function is as follows. Subunit a, of the mitochondrial membrane ATP synthase complex (F(1)F(0) ATP synthase or Complex V) that produces ATP from ADP in the presence of a proton gradient across the membrane which is generated by electron transport complexes of the respiratory chain. ATP synthase complex consist of a soluble F(1) head domain - the catalytic core - and a membrane F(1) domain - the membrane proton channel. These two domains are linked by a central stalk rotating inside the F(1) region and a stationary peripheral stalk. During catalysis, ATP synthesis in the catalytic domain of F(1) is coupled via a rotary mechanism of the central stalk subunits to proton translocation. With the subunit c (ATP5MC1), forms the proton-conducting channel in the F(0) domain, that contains two crucial half-channels (inlet and outlet) that facilitate proton movement from the mitochondrial intermembrane space (IMS) into the matrix. Protons are taken up via the inlet half-channel and released through the outlet half-channel, following a Grotthuss mechanism. This chain is ATP synthase F(0) complex subunit a, found in Mammuthus primigenius (Siberian woolly mammoth).